A 314-amino-acid chain; its full sequence is Olfactory receptor 14K1 (314 aa).

The Extracellular segment spans residues 1–23 (MTNQTQMMEFLLVRFTENWVLLR). N-linked (GlcNAc...) asparagine glycosylation is present at asparagine 3. The helical transmembrane segment at 24–44 (LHALLFSLIYLTAVLMNLVII) threads the bilayer. Residues 45–52 (LLMILDHR) lie on the Cytoplasmic side of the membrane. Residues 53 to 73 (LHMAMYFFLRHLSFLDLCLIS) traverse the membrane as a helical segment. Over 74-97 (ATVPKSILNSVASTDSISFLGCVL) the chain is Extracellular. Cysteine 95 and cysteine 187 are oxidised to a cystine. The helical transmembrane segment at 98 to 118 (QLFLVVLLAGSEIGILTAMSY) threads the bilayer. Residues 119-131 (DRYAAICCPLHCE) lie on the Cytoplasmic side of the membrane. The chain crosses the membrane as a helical span at residues 132–152 (AVMSRGLCVQLMALSWLNRGA). Residues 153–194 (LGLLYTAGTFSLNFYGSDELHQFFCDVPALLKLTCSKEHAII) lie on the Extracellular side of the membrane. Residues 195–215 (SVSVAIGVCYAFSCLVCIVVS) form a helical membrane-spanning segment. Residues 216–235 (YVYIFSAVLRISQRQRQSKA) lie on the Cytoplasmic side of the membrane. A helical transmembrane segment spans residues 236-256 (FSNCVPHLIVVTVFLVTGAVA). Residues 257 to 269 (YLKPGSDAPSILD) lie on the Extracellular side of the membrane. The chain crosses the membrane as a helical span at residues 270-290 (LLVSVFYSVAPPTLNPVIYCL). Residues 291-314 (KNKDIKSALSKVLWNVRSSGVMKR) lie on the Cytoplasmic side of the membrane.

This sequence belongs to the G-protein coupled receptor 1 family.

The protein resides in the cell membrane. Odorant receptor. The chain is Olfactory receptor 14K1 (OR14K1) from Homo sapiens (Human).